A 136-amino-acid polypeptide reads, in one-letter code: Large ribosomal subunit protein uL16 (136 aa).

Belongs to the universal ribosomal protein uL16 family. As to quaternary structure, part of the 50S ribosomal subunit.

Its function is as follows. Binds 23S rRNA and is also seen to make contacts with the A and possibly P site tRNAs. This is Large ribosomal subunit protein uL16 from Pelagibacter ubique (strain HTCC1062).